The primary structure comprises 110 residues: PCNA-associated factor (110 aa).

A Glycyl lysine isopeptide (Lys-Gly) (interchain with G-Cter in ubiquitin) cross-link involves residue Lys15. A D-box motif is present at residues 23–34 (RKVLGSSTFVTN). The residue at position 24 (Lys24) is an N6-acetyllysine; alternate. Lys24 participates in a covalent cross-link: Glycyl lysine isopeptide (Lys-Gly) (interchain with G-Cter in ubiquitin); alternate. Phosphoserine occurs at positions 28 and 71. Low complexity predominate over residues 28–39 (SSTFVTNSSSSS). The disordered stretch occupies residues 28 to 110 (SSTFVTNSSS…QPDHRDDENE (83 aa)). The PIP-box motif lies at 61–71 (QKGIGEFFRLS). Basic and acidic residues predominate over residues 71–80 (SPKESKKENQ). The KEN box motif lies at 77-79 (KEN). An Initiation motif motif is present at residues 84-96 (EAGTSGLGKAKRK).

In terms of assembly, interacts (when monoubiquitinated at Lys-15 and Lys-24) with PCNA. Interacts with isoform 2/p33ING1b of ING1. Interacts with BRCA1. Monoubiquitinated at Lys-15 and Lys-24 during normal S phase, promoting its association with PCNA. Also diubiquitinated at these 2 sites. Following DNA damage, monoubiquitin chains at Lys-15 and Lys-24 are probably extended, leading to disrupt the interaction with PCNA. Polyubiquitinated by the APC/C complex at the mitotic exit, leading to its degradation by the proteasome.

It is found in the nucleus. Its subcellular location is the cytoplasm. The protein localises to the perinuclear region. Its function is as follows. PCNA-binding protein that acts as a regulator of DNA repair during DNA replication. Following DNA damage, the interaction with PCNA is disrupted, facilitating the interaction between monoubiquitinated PCNA and the translesion DNA synthesis DNA polymerase eta (POLH) at stalled replisomes, facilitating the bypass of replication-fork-blocking lesions. Also acts as a regulator of centrosome number. The chain is PCNA-associated factor from Mus musculus (Mouse).